Here is a 475-residue protein sequence, read N- to C-terminus: MVPQTETKAGAGFKAGVKDYRLTYYTPDYVVKDTDILAAFRMTPQPGVPAEECGAAVAAESSTGTWTTVWTDGLTSLDRYKGRCYDIEPVPGEDNQYIAYVAYPIDLFEEGSVTNLFTSIVGNVFGFKALRALRLEDLRIPPAYVKTFSGPPHGIQVERDKINKYGRGLLGCTIKPKLGLSAKNYGRAVYECLRGGLDFTKDDENVNSQPFMRWRDRFLFCAEAIYKAQAETGEVKGHYLNATAGTSEEMIKRAVCAKEFGVPIIMHDYLTGGFTANTSLSNYCRDHGLLLHIHRAMHAVIDRQRNHGIHFRVLAKALRMSGGDHLHSGTVVGKLEGEREVTLGFVDLMRDNYIEKDRSRGIYFTQDWCSMAGVMPVASGGIHVWHMPALVEIFGDDACLQFGGGTLGHPWGNAPGAVANRVALEACTQARNEGRDLAREGGDVIRSACKWSPELAAACEVWKEIKVEFDTIDKL.

The propeptide occupies 1-2 (MV). An N-acetylproline modification is found at Pro-3. Lys-14 carries the N6,N6,N6-trimethyllysine modification. 2 residues coordinate substrate: Asn-123 and Thr-173. The Proton acceptor role is filled by Lys-175. A substrate-binding site is contributed by Lys-177. Residues Lys-201, Asp-203, and Glu-204 each contribute to the Mg(2+) site. The residue at position 201 (Lys-201) is an N6-carboxylysine. His-294 serves as the catalytic Proton acceptor. Residues Arg-295, His-327, and Ser-379 each coordinate substrate.

This sequence belongs to the RuBisCO large chain family. Type I subfamily. In terms of assembly, heterohexadecamer of 8 large chains and 8 small chains. Requires Mg(2+) as cofactor.

It is found in the plastid. Its subcellular location is the chloroplast. It carries out the reaction 2 (2R)-3-phosphoglycerate + 2 H(+) = D-ribulose 1,5-bisphosphate + CO2 + H2O. The catalysed reaction is D-ribulose 1,5-bisphosphate + O2 = 2-phosphoglycolate + (2R)-3-phosphoglycerate + 2 H(+). Functionally, ruBisCO catalyzes two reactions: the carboxylation of D-ribulose 1,5-bisphosphate, the primary event in carbon dioxide fixation, as well as the oxidative fragmentation of the pentose substrate in the photorespiration process. Both reactions occur simultaneously and in competition at the same active site. The chain is Ribulose bisphosphate carboxylase large chain from Chlamydomonas moewusii (Chlamydomonas eugametos).